Consider the following 126-residue polypeptide: Methylglyoxal synthase (126 aa).

In terms of domain architecture, MGS-like spans 1–126 (MADRKCLALI…AEQLIDFRRN (126 aa)). Substrate-binding positions include H12, K16, 38 to 41 (TGTT), and 59 to 60 (SG). Catalysis depends on D65, which acts as the Proton donor/acceptor. H92 contributes to the substrate binding site.

Belongs to the methylglyoxal synthase family.

The enzyme catalyses dihydroxyacetone phosphate = methylglyoxal + phosphate. In terms of biological role, catalyzes the formation of methylglyoxal from dihydroxyacetone phosphate. The polypeptide is Methylglyoxal synthase (Rhizobium meliloti (strain 1021) (Ensifer meliloti)).